The primary structure comprises 175 residues: General odorant-binding protein 84a (175 aa).

The N-terminal stretch at 1–24 is a signal peptide; the sequence is MYSALVRACAVIAFLILSPNCARA. Intrachain disulfides connect Cys103/Cys151 and Cys140/Cys160.

As to expression, present only in a small number of hairs scattered over the surface of the funiculus.

It localises to the secreted. This chain is General odorant-binding protein 84a (Obp84a), found in Drosophila melanogaster (Fruit fly).